We begin with the raw amino-acid sequence, 149 residues long: D-aminoacyl-tRNA deacylase (149 aa).

The Gly-cisPro motif, important for rejection of L-amino acids motif lies at 141-142; that stretch reads GP.

It belongs to the DTD family. In terms of assembly, homodimer.

The protein localises to the cytoplasm. The enzyme catalyses glycyl-tRNA(Ala) + H2O = tRNA(Ala) + glycine + H(+). It catalyses the reaction a D-aminoacyl-tRNA + H2O = a tRNA + a D-alpha-amino acid + H(+). Functionally, an aminoacyl-tRNA editing enzyme that deacylates mischarged D-aminoacyl-tRNAs. Also deacylates mischarged glycyl-tRNA(Ala), protecting cells against glycine mischarging by AlaRS. Acts via tRNA-based rather than protein-based catalysis; rejects L-amino acids rather than detecting D-amino acids in the active site. By recycling D-aminoacyl-tRNA to D-amino acids and free tRNA molecules, this enzyme counteracts the toxicity associated with the formation of D-aminoacyl-tRNA entities in vivo and helps enforce protein L-homochirality. This chain is D-aminoacyl-tRNA deacylase, found in Streptomyces griseus subsp. griseus (strain JCM 4626 / CBS 651.72 / NBRC 13350 / KCC S-0626 / ISP 5235).